The primary structure comprises 822 residues: MKNRSSSPPLHVHVDENTPVHVHIKKGQKTTPAKCQQKHKQKMKGNTVNVRRAVQVKTKAPWMPPGKTSVLDSTYKWEGPTHLLEITPPESEKMMSVLRLSDLSTDEEDAVCCKMNEYERKIDSLMNVVGTLKNEAKLQKQEQRQQMTKRLLEEQKEELNEVTQELAESEHENTLLRRNIERMREEKDLTMLQKKYLQHEKECLLSKLSEAERDGAAAAREIHALKSTIERLNVEKHMSSSDINMLTRQKELLLQKLSTFEETNRTLRELLREQHERERDVQKILEKQGVLMKMLADSDAEKLQLQMRLQDKEKEINNLAVQIQEEKEQARTASELSKSLESVRGHLQAQLRHKEAENNRLTTQIRNLERSEAQHKAEVECIKDQLKELRQKADRDKDALKRALRAQKERAERSEECAGQLAVQLAEKDSYVAEALSTLESWRSRYNKVVKDKSDLELEMVTVNSRIADLLEQQATLEDKMREDRDALMDKLHQQTTETTSFRMENERLKASVVPMEEKLNQAHVEVQQLKSSVRNYEDLIETYKSQVLKTRMEAADVAAKLEKCDNEKKALKDEMNKELELARKQFQSQLAELEKLPEILRITETQLAECQDQLQSYEKKNMDLSVMIADLRQRIELQGDKMEMTRERYQSAQEEKKQLTLKAEELERKLETTSTQNIEFLQVIAKREESIHQCQLRLEEKTRECSSLARQLEMAIEDAKREVEQTRERATSRERAAQSKVLDLETQLSRTKTELNQLRRNKEDAERRYESRLQDLKDRLEQSESTNRSMQNYVQFLKSSYANVFADSALLGSPGRSRSSP.

The tract at residues 26–45 (KGQKTTPAKCQQKHKQKMKG) is disordered. Coiled-coil stretches lie at residues 113-418 (CKMN…EECA), 452-490 (DKSD…ALMD), and 516-796 (MEEK…NYVQ).

It belongs to the ODF2 family. Self-associates. Associates with microtubules and forms a fibrillar structure partially linked to the microtubule network.

It is found in the cytoplasm. It localises to the cytoskeleton. The protein resides in the microtubule organizing center. Its subcellular location is the centrosome. The protein localises to the cell projection. It is found in the cilium. It localises to the centriole. The protein resides in the spindle pole. Its subcellular location is the flagellum. Functionally, seems to be a major component of sperm tail outer dense fibers (ODF). ODFs are filamentous structures located on the outside of the axoneme in the midpiece and principal piece of the mammalian sperm tail and may help to maintain the passive elastic structures and elastic recoil of the sperm tail. In Gallus gallus (Chicken), this protein is Outer dense fiber protein 2 (ODF2).